The sequence spans 697 residues: PHD finger protein At1g33420 (697 aa).

The PHD-type zinc-finger motif lies at 603-653; it reads KVDCKCGTKDDDGERMLACDGCGVWHHTRCIGINNADALPSKFLCFRCIEL.

The protein localises to the nucleus. The protein is PHD finger protein At1g33420 of Arabidopsis thaliana (Mouse-ear cress).